A 1342-amino-acid chain; its full sequence is DNA-directed RNA polymerase subunit beta (1342 aa).

It belongs to the RNA polymerase beta chain family. As to quaternary structure, the RNAP catalytic core consists of 2 alpha, 1 beta, 1 beta' and 1 omega subunit. When a sigma factor is associated with the core the holoenzyme is formed, which can initiate transcription.

The catalysed reaction is RNA(n) + a ribonucleoside 5'-triphosphate = RNA(n+1) + diphosphate. Functionally, DNA-dependent RNA polymerase catalyzes the transcription of DNA into RNA using the four ribonucleoside triphosphates as substrates. The chain is DNA-directed RNA polymerase subunit beta from Wigglesworthia glossinidia brevipalpis.